A 370-amino-acid polypeptide reads, in one-letter code: Putative transport protein YdiK (370 aa).

The Periplasmic segment spans residues 1–17; it reads MVNVRQPRDVAQILLSV. Residues 18-38 traverse the membrane as a helical segment; that stretch reads LFLAIMIVACLWIVQPFILGF. A topological domain (cytoplasmic) is located at residue A39. A helical membrane pass occupies residues 40 to 60; it reads WAGTVVIATWPVLLRLQKIMF. Residues 61-65 lie on the Periplasmic side of the membrane; the sequence is GRRSL. A helical transmembrane segment spans residues 66–86; that stretch reads AVLVMTLLLVMVFIIPIALLV. At 87–106 the chain is on the cytoplasmic side; sequence NSIVDGSGPLIKAISSGDMT. A helical transmembrane segment spans residues 107–127; sequence LPDLAWLNTIPVIGAKLYAGW. The Periplasmic portion of the chain corresponds to 128 to 156; that stretch reads HNLLDMGGTAIMAKVRPYIGTTTTWFVGQ. Residues 157-177 form a helical membrane-spanning segment; sequence AAHIGRFMVHCALMLLFSALL. The Cytoplasmic segment spans residues 178 to 213; it reads YWRGEQVAQGIRHFATRLAGVRGDAAVLLAAQAIRA. The chain crosses the membrane as a helical span at residues 214–234; the sequence is VALGVVVTALVQAVLGGIGLA. The Periplasmic portion of the chain corresponds to 235–248; the sequence is VSGVPYATLLTVLM. Residues 249–269 traverse the membrane as a helical segment; sequence ILSCLVQLGPLPVLIPAIIWL. Residues 270–274 lie on the Cytoplasmic side of the membrane; the sequence is YWTGD. A helical transmembrane segment spans residues 275–295; it reads TTWGTVLLVWSGVVGTLDNVI. Over 296–308 the chain is Periplasmic; the sequence is RPMLIRMGADLPL. A helical membrane pass occupies residues 309–329; it reads ILILSGVIGGLIAFGMIGLFI. The Cytoplasmic portion of the chain corresponds to 330–370; it reads GPVLLAVSWRLFAAWVEEVPPPTDQPEEILEELGEIEKPNK.

It belongs to the autoinducer-2 exporter (AI-2E) (TC 2.A.86) family.

It localises to the cell inner membrane. In Escherichia coli (strain K12), this protein is Putative transport protein YdiK (ydiK).